A 159-amino-acid chain; its full sequence is Carbohydrate sulfotransferase 15 (159 aa).

Residues 1-159 (SGTTDFYRRI…YQPHNERLVK (159 aa)) lie on the Lumenal side of the membrane. Asn-42 and Asn-112 each carry an N-linked (GlcNAc...) asparagine glycan.

This sequence belongs to the sulfotransferase 1 family. Requires a divalent metal cation as cofactor. Glutathione serves as cofactor.

It localises to the golgi apparatus membrane. The enzyme catalyses dermatan 4'-sulfate + n 3'-phosphoadenylyl sulfate = dermatan 4',6'-bissulfate + n adenosine 3',5'-bisphosphate + n H(+). It carries out the reaction chondroitin 4'-sulfate + n 3'-phosphoadenylyl sulfate = chondroitin 4',6'-bissulfate + n adenosine 3',5'-bisphosphate + n H(+). Functionally, sulfotransferase that transfers sulfate from 3'-phosphoadenosine 5'-phosphosulfate (PAPS) to the C-6 hydroxyl group of the GalNAc 4-sulfate residue of chondroitin sulfate A and forms chondroitin sulfate E containing GlcA-GalNAc(4,6-SO(4)) repeating units. In Nototodarus sloanii (Wellington flying squid), this protein is Carbohydrate sulfotransferase 15 (GALNAC4S6ST).